Consider the following 129-residue polypeptide: Glycine cleavage system H protein (129 aa).

In terms of domain architecture, Lipoyl-binding spans 24–106; it reads LFKIGVSEFA…IGDGWLLIIK (83 aa). N6-lipoyllysine is present on K65.

It belongs to the GcvH family. As to quaternary structure, the glycine cleavage system is composed of four proteins: P, T, L and H. The cofactor is (R)-lipoate.

In terms of biological role, the glycine cleavage system catalyzes the degradation of glycine. The H protein shuttles the methylamine group of glycine from the P protein to the T protein. The chain is Glycine cleavage system H protein from Prochlorococcus marinus subsp. pastoris (strain CCMP1986 / NIES-2087 / MED4).